The primary structure comprises 745 residues: Elongation factor G, mitochondrial (745 aa).

In terms of domain architecture, tr-type G spans 40-317; sequence ERIRNIGISA…AVLDYLPNPG (278 aa). GTP is bound by residues 49–56, 116–120, and 170–173; these read AHIDSGKT, DTPGH, and NKLD.

It belongs to the TRAFAC class translation factor GTPase superfamily. Classic translation factor GTPase family. EF-G/EF-2 subfamily.

The protein resides in the mitochondrion. Its pathway is protein biosynthesis; polypeptide chain elongation. Mitochondrial GTPase that catalyzes the GTP-dependent ribosomal translocation step during translation elongation. During this step, the ribosome changes from the pre-translocational (PRE) to the post-translocational (POST) state as the newly formed A-site-bound peptidyl-tRNA and P-site-bound deacylated tRNA move to the P and E sites, respectively. Catalyzes the coordinated movement of the two tRNA molecules, the mRNA and conformational changes in the ribosome. Essential during development as it acts as a retrograde signal from mitochondria to the nucleus to slow down cell proliferation if mitochondrial energy output is low. In Drosophila yakuba (Fruit fly), this protein is Elongation factor G, mitochondrial.